Here is a 314-residue protein sequence, read N- to C-terminus: 4-hydroxy-3-methylbut-2-enyl diphosphate reductase (314 aa).

Cys12 provides a ligand contact to [4Fe-4S] cluster. His41 and His74 together coordinate (2E)-4-hydroxy-3-methylbut-2-enyl diphosphate. The dimethylallyl diphosphate site is built by His41 and His74. Isopentenyl diphosphate-binding residues include His41 and His74. Cys96 contributes to the [4Fe-4S] cluster binding site. His124 contributes to the (2E)-4-hydroxy-3-methylbut-2-enyl diphosphate binding site. His124 provides a ligand contact to dimethylallyl diphosphate. Position 124 (His124) interacts with isopentenyl diphosphate. Glu126 serves as the catalytic Proton donor. Thr167 contributes to the (2E)-4-hydroxy-3-methylbut-2-enyl diphosphate binding site. Cys197 contacts [4Fe-4S] cluster. (2E)-4-hydroxy-3-methylbut-2-enyl diphosphate-binding residues include Ser225, Ser226, Asn227, and Ser269. The dimethylallyl diphosphate site is built by Ser225, Ser226, Asn227, and Ser269. Isopentenyl diphosphate contacts are provided by Ser225, Ser226, Asn227, and Ser269.

Belongs to the IspH family. [4Fe-4S] cluster serves as cofactor.

It catalyses the reaction isopentenyl diphosphate + 2 oxidized [2Fe-2S]-[ferredoxin] + H2O = (2E)-4-hydroxy-3-methylbut-2-enyl diphosphate + 2 reduced [2Fe-2S]-[ferredoxin] + 2 H(+). The catalysed reaction is dimethylallyl diphosphate + 2 oxidized [2Fe-2S]-[ferredoxin] + H2O = (2E)-4-hydroxy-3-methylbut-2-enyl diphosphate + 2 reduced [2Fe-2S]-[ferredoxin] + 2 H(+). It functions in the pathway isoprenoid biosynthesis; dimethylallyl diphosphate biosynthesis; dimethylallyl diphosphate from (2E)-4-hydroxy-3-methylbutenyl diphosphate: step 1/1. It participates in isoprenoid biosynthesis; isopentenyl diphosphate biosynthesis via DXP pathway; isopentenyl diphosphate from 1-deoxy-D-xylulose 5-phosphate: step 6/6. Its function is as follows. Catalyzes the conversion of 1-hydroxy-2-methyl-2-(E)-butenyl 4-diphosphate (HMBPP) into a mixture of isopentenyl diphosphate (IPP) and dimethylallyl diphosphate (DMAPP). Acts in the terminal step of the DOXP/MEP pathway for isoprenoid precursor biosynthesis. This chain is 4-hydroxy-3-methylbut-2-enyl diphosphate reductase, found in Actinobacillus pleuropneumoniae serotype 7 (strain AP76).